Reading from the N-terminus, the 631-residue chain is Eukaryotic translation initiation factor 2-alpha kinase 1 (631 aa).

The interval M1–S34 is disordered. An SIFI-degron motif is present at residues L85–L104. The 417-residue stretch at F167 to F583 folds into the Protein kinase domain. Residues L173–V181 and K196 contribute to the ATP site. The segment at Q260–N301 is disordered. T285 is subject to Phosphothreonine. Basic and acidic residues predominate over residues T285 to N301. The stretch at A410 to M415 is one HRM 1 repeat. Catalysis depends on D442, which acts as the Proton acceptor. Phosphothreonine; by autocatalysis is present on residues T486 and T488. A Phosphothreonine modification is found at T493. Residues R552–A557 form an HRM 2 repeat.

The protein belongs to the protein kinase superfamily. Ser/Thr protein kinase family. GCN2 subfamily. In terms of assembly, synthesized in an inactive form that binds to the N-terminal domain of CDC37. Has to be associated with a multiprotein complex containing Hsp90, CDC37 and PPP5C for maturation and activation by autophosphorylation. The phosphatase PPP5C modulates this activation. Homodimer; homodimerizes in presence of heme, forming a disulfide-linked inactive homodimer. Interacts with DELE1; binds both to full-length DELE1 and processed form of DELE1 (S-DELE1) in response to stress, leading to activate its protein kinase activity and trigger the integrated stress response (ISR). Activated by autophosphorylation; phosphorylated predominantly on serine and threonine residues, but also on tyrosine residues. Autophosphorylation at Thr-488 is required for kinase activation. The active autophosphorylated form apparently is largely refractory to cellular heme fluctuations. Post-translationally, ubiquitinated and degraded by the SIFI complex once the mitochondrial stress has been resolved, thereby providing stress response silencing. Within the SIFI complex, UBR4 initiates ubiquitin chain that are further elongated or branched by KCMF1.

Its subcellular location is the cytoplasm. It carries out the reaction L-seryl-[protein] + ATP = O-phospho-L-seryl-[protein] + ADP + H(+). The enzyme catalyses L-threonyl-[protein] + ATP = O-phospho-L-threonyl-[protein] + ADP + H(+). Its activity is regulated as follows. In normal conditions, the protein kinase activity is inhibited; inhibition is relieved by various stress conditions. Inhibited by heme: in presence of heme, forms a disulfide-linked inactive homodimer. Heme depletion relieves inhibition and stimulates kinase activity by autophosphorylation. Inhibited by the heme metabolites biliverdin and bilirubin. Induced by oxidative stress generated by arsenite treatment. Binding of nitric oxide (NO) to the heme iron in the N-terminal heme-binding domain activates the kinase activity, while binding of carbon monoxide (CO) suppresses kinase activity. Protein kinase activity is also activated upon binding to DELE1 in response to various stress, triggering the integrated stress response (ISR): activated by full-length DELE1 in response to iron deficiency, while it is activated by the processed form of DELE1 (S-DELE1) in response to mitochondrial stress. In terms of biological role, metabolic-stress sensing protein kinase that phosphorylates the alpha subunit of eukaryotic translation initiation factor 2 (EIF2S1/eIF-2-alpha) in response to various stress conditions. Key activator of the integrated stress response (ISR) required for adaptation to various stress, such as heme deficiency, oxidative stress, osmotic shock, mitochondrial dysfunction and heat shock. EIF2S1/eIF-2-alpha phosphorylation in response to stress converts EIF2S1/eIF-2-alpha in a global protein synthesis inhibitor, leading to a global attenuation of cap-dependent translation, while concomitantly initiating the preferential translation of ISR-specific mRNAs, such as the transcriptional activator ATF4, and hence allowing ATF4-mediated reprogramming. Acts as a key sensor of heme-deficiency: in normal conditions, binds hemin via a cysteine thiolate and histidine nitrogenous coordination, leading to inhibit the protein kinase activity. This binding occurs with moderate affinity, allowing it to sense the heme concentration within the cell: heme depletion relieves inhibition and stimulates kinase activity, activating the ISR. Thanks to this unique heme-sensing capacity, plays a crucial role to shut off protein synthesis during acute heme-deficient conditions. In red blood cells (RBCs), controls hemoglobin synthesis ensuring a coordinated regulation of the synthesis of its heme and globin moieties. It thereby plays an essential protective role for RBC survival in anemias of iron deficiency. Iron deficiency also triggers activation by full-length DELE1. Also activates the ISR in response to mitochondrial dysfunction: HRI/EIF2AK1 protein kinase activity is activated upon binding to the processed form of DELE1 (S-DELE1), thereby promoting the ATF4-mediated reprogramming. Also acts as an activator of mitophagy in response to mitochondrial damage: catalyzes phosphorylation of eIF-2-alpha (EIF2S1) following activation by S-DELE1, thereby promoting mitochondrial localization of EIF2S1, triggering PRKN-independent mitophagy. This is Eukaryotic translation initiation factor 2-alpha kinase 1 from Macaca fascicularis (Crab-eating macaque).